Consider the following 94-residue polypeptide: MANERPTSQQRPAGGPRKRRPFQRRKVCRFCAEKNLTIDYKEPRTLRYFITERGKIVPRRISGNCSAHQREITEAIKRARNLALLPIASNHTLP.

Residues 1-11 (MANERPTSQQR) show a composition bias toward polar residues. Residues 1–24 (MANERPTSQQRPAGGPRKRRPFQR) are disordered.

The protein belongs to the bacterial ribosomal protein bS18 family. In terms of assembly, part of the 30S ribosomal subunit. Forms a tight heterodimer with protein bS6.

Functionally, binds as a heterodimer with protein bS6 to the central domain of the 16S rRNA, where it helps stabilize the platform of the 30S subunit. The sequence is that of Small ribosomal subunit protein bS18 from Pelobacter propionicus (strain DSM 2379 / NBRC 103807 / OttBd1).